A 353-amino-acid polypeptide reads, in one-letter code: Photosystem II D2 protein (353 aa).

Thr-2 is subject to N-acetylthreonine. Thr-2 carries the phosphothreonine modification. A helical transmembrane segment spans residues 41-61 (CAYFALGGWLTGTTFVTSWYT). His-118 is a chlorophyll a binding site. Residues 125–141 (GFMLRQFEIARSVGLRP) traverse the membrane as a helical segment. Residues Gln-130 and Asn-143 each coordinate pheophytin a. A helical membrane pass occupies residues 153–166 (VFVSVFLIYPLGQS). His-198 is a binding site for chlorophyll a. Residues 208 to 228 (AALLCAIHGATVENTIFEDGD) traverse the membrane as a helical segment. Residues His-215 and Phe-262 each contribute to the a plastoquinone site. Residue His-215 participates in Fe cation binding. His-269 contacts Fe cation. The helical transmembrane segment at 279-295 (GLWMSAIGVVGLALNLR) threads the bilayer.

This sequence belongs to the reaction center PufL/M/PsbA/D family. PSII is composed of 1 copy each of membrane proteins PsbA, PsbB, PsbC, PsbD, PsbE, PsbF, PsbH, PsbI, PsbJ, PsbK, PsbL, PsbM, PsbT, PsbX, PsbY, PsbZ, Psb30/Ycf12, at least 3 peripheral proteins of the oxygen-evolving complex and a large number of cofactors. It forms dimeric complexes. Requires The D1/D2 heterodimer binds P680, chlorophylls that are the primary electron donor of PSII, and subsequent electron acceptors. It shares a non-heme iron and each subunit binds pheophytin, quinone, additional chlorophylls, carotenoids and lipids. There is also a Cl(-1) ion associated with D1 and D2, which is required for oxygen evolution. The PSII complex binds additional chlorophylls, carotenoids and specific lipids. as cofactor.

It is found in the plastid. It localises to the chloroplast thylakoid membrane. It catalyses the reaction 2 a plastoquinone + 4 hnu + 2 H2O = 2 a plastoquinol + O2. Functionally, photosystem II (PSII) is a light-driven water:plastoquinone oxidoreductase that uses light energy to abstract electrons from H(2)O, generating O(2) and a proton gradient subsequently used for ATP formation. It consists of a core antenna complex that captures photons, and an electron transfer chain that converts photonic excitation into a charge separation. The D1/D2 (PsbA/PsbD) reaction center heterodimer binds P680, the primary electron donor of PSII as well as several subsequent electron acceptors. D2 is needed for assembly of a stable PSII complex. This chain is Photosystem II D2 protein, found in Staurastrum punctulatum (Green alga).